Consider the following 195-residue polypeptide: Holliday junction branch migration complex subunit RuvA (195 aa).

The domain I stretch occupies residues 1–61 (MYEYLDGVVV…ENDQTLYGFK (61 aa)). The domain II stretch occupies residues 62-139 (KAEDKELFLN…AVENEVGTLF (78 aa)). Residues 139 to 143 (FDLST) are flexible linker. The interval 144-195 (TSNQALDEALEALIALGYSEKEVKKLTKKLSEQTDRTTDQYISSGLKLLMKG) is domain III.

Belongs to the RuvA family. Homotetramer. Forms an RuvA(8)-RuvB(12)-Holliday junction (HJ) complex. HJ DNA is sandwiched between 2 RuvA tetramers; dsDNA enters through RuvA and exits via RuvB. An RuvB hexamer assembles on each DNA strand where it exits the tetramer. Each RuvB hexamer is contacted by two RuvA subunits (via domain III) on 2 adjacent RuvB subunits; this complex drives branch migration. In the full resolvosome a probable DNA-RuvA(4)-RuvB(12)-RuvC(2) complex forms which resolves the HJ.

The protein localises to the cytoplasm. Its function is as follows. The RuvA-RuvB-RuvC complex processes Holliday junction (HJ) DNA during genetic recombination and DNA repair, while the RuvA-RuvB complex plays an important role in the rescue of blocked DNA replication forks via replication fork reversal (RFR). RuvA specifically binds to HJ cruciform DNA, conferring on it an open structure. The RuvB hexamer acts as an ATP-dependent pump, pulling dsDNA into and through the RuvAB complex. HJ branch migration allows RuvC to scan DNA until it finds its consensus sequence, where it cleaves and resolves the cruciform DNA. In Pediococcus pentosaceus (strain ATCC 25745 / CCUG 21536 / LMG 10740 / 183-1w), this protein is Holliday junction branch migration complex subunit RuvA.